We begin with the raw amino-acid sequence, 430 residues long: MNVKVENIEKNVVKLEITVDSEKFNEAVKKSFKKNAKRFNVPGFRKGKAPLNIIKKYYGEGVLFEDAINFCCEDTYPKAIEENNIKPVDYPQIDVVQIGEGKDFIYTAEVTTVPEVKLGEYKGVEVKKVSYEVEDEAVENELKSMQEKNARVFLKEEGEIEKGNIAIIDFKGYVDGKAFEGGEAKDYEIEIGSGTFIGDFEDQLVGLKKDESKEVNVSFPEEYGREDLNGKPATFEVTIKDIKVKELPALDDEFAKEVSEFDTLEELKSDIKDRMKKELSEKAKAEYEEAVVEAVGANAEIEIPKVMIEKEIENMVRDLEMRLKYQGLDLKSYYEFTNSSEEKVKEYMRETAEKRVKTDLIMQEIAKVEDIKATEEELKEKAMEVAKQYGQKDVEKTAELIANAQKSYLEIDIVNGKVLDLLVENSKEIA.

Positions 163–248 (GNIAIIDFKG…IKDIKVKELP (86 aa)) constitute a PPIase FKBP-type domain.

This sequence belongs to the FKBP-type PPIase family. Tig subfamily.

Its subcellular location is the cytoplasm. The enzyme catalyses [protein]-peptidylproline (omega=180) = [protein]-peptidylproline (omega=0). Functionally, involved in protein export. Acts as a chaperone by maintaining the newly synthesized protein in an open conformation. Functions as a peptidyl-prolyl cis-trans isomerase. In Clostridium botulinum (strain Loch Maree / Type A3), this protein is Trigger factor.